We begin with the raw amino-acid sequence, 154 residues long: Large-conductance mechanosensitive channel (154 aa).

The next 3 membrane-spanning stretches (helical) occupy residues 16–36 (VLGL…ISSV), 39–59 (DLLM…GFFI), and 89–109 (GQFL…FMIM).

It belongs to the MscL family. In terms of assembly, homopentamer.

Its subcellular location is the cell inner membrane. Channel that opens in response to stretch forces in the membrane lipid bilayer. May participate in the regulation of osmotic pressure changes within the cell. The chain is Large-conductance mechanosensitive channel from Zymomonas mobilis subsp. mobilis (strain ATCC 31821 / ZM4 / CP4).